The chain runs to 140 residues: Nucleoside diphosphate kinase (140 aa).

Lys11, Phe59, Arg87, Thr93, Arg104, and Asn114 together coordinate ATP. His117 (pros-phosphohistidine intermediate) is an active-site residue.

Belongs to the NDK family. In terms of assembly, homotetramer. Mg(2+) serves as cofactor.

The protein resides in the cytoplasm. It catalyses the reaction a 2'-deoxyribonucleoside 5'-diphosphate + ATP = a 2'-deoxyribonucleoside 5'-triphosphate + ADP. It carries out the reaction a ribonucleoside 5'-diphosphate + ATP = a ribonucleoside 5'-triphosphate + ADP. Major role in the synthesis of nucleoside triphosphates other than ATP. The ATP gamma phosphate is transferred to the NDP beta phosphate via a ping-pong mechanism, using a phosphorylated active-site intermediate. The sequence is that of Nucleoside diphosphate kinase from Hyphomonas neptunium (strain ATCC 15444).